We begin with the raw amino-acid sequence, 320 residues long: GMP reductase (320 aa).

Cys-174 serves as the catalytic Thioimidate intermediate. Residue 203–226 coordinates NADP(+); it reads IIADGGLRVNGDIAKSIRFGATMC.

Belongs to the IMPDH/GMPR family. GuaC type 2 subfamily.

The catalysed reaction is IMP + NH4(+) + NADP(+) = GMP + NADPH + 2 H(+). Functionally, catalyzes the irreversible NADPH-dependent deamination of GMP to IMP. It functions in the conversion of nucleobase, nucleoside and nucleotide derivatives of G to A nucleotides, and in maintaining the intracellular balance of A and G nucleotides. The protein is GMP reductase of Mesoplasma florum (strain ATCC 33453 / NBRC 100688 / NCTC 11704 / L1) (Acholeplasma florum).